We begin with the raw amino-acid sequence, 187 residues long: Elongation factor P (187 aa).

This sequence belongs to the elongation factor P family.

The protein localises to the cytoplasm. It functions in the pathway protein biosynthesis; polypeptide chain elongation. Involved in peptide bond synthesis. Stimulates efficient translation and peptide-bond synthesis on native or reconstituted 70S ribosomes in vitro. Probably functions indirectly by altering the affinity of the ribosome for aminoacyl-tRNA, thus increasing their reactivity as acceptors for peptidyl transferase. In Azobacteroides pseudotrichonymphae genomovar. CFP2, this protein is Elongation factor P.